Consider the following 596-residue polypeptide: V-type ATP synthase alpha chain (596 aa).

233-240 (GPFGAGKT) serves as a coordination point for ATP.

Belongs to the ATPase alpha/beta chains family.

It catalyses the reaction ATP + H2O + 4 H(+)(in) = ADP + phosphate + 5 H(+)(out). In terms of biological role, produces ATP from ADP in the presence of a proton gradient across the membrane. The V-type alpha chain is a catalytic subunit. This Streptococcus gordonii (strain Challis / ATCC 35105 / BCRC 15272 / CH1 / DL1 / V288) protein is V-type ATP synthase alpha chain.